We begin with the raw amino-acid sequence, 105 residues long: Phosphoribosyl-ATP pyrophosphatase (105 aa).

Belongs to the PRA-PH family.

It localises to the cytoplasm. The catalysed reaction is 1-(5-phospho-beta-D-ribosyl)-ATP + H2O = 1-(5-phospho-beta-D-ribosyl)-5'-AMP + diphosphate + H(+). Its pathway is amino-acid biosynthesis; L-histidine biosynthesis; L-histidine from 5-phospho-alpha-D-ribose 1-diphosphate: step 2/9. This Ruthia magnifica subsp. Calyptogena magnifica protein is Phosphoribosyl-ATP pyrophosphatase.